The sequence spans 693 residues: E3 ubiquitin-protein ligase MARCHF7 (693 aa).

At Met-1 the chain carries N-acetylmethionine. 7 disordered regions span residues 1–43 (MESK…RDSS), 69–136 (ESEI…LGSF), 158–281 (LMDY…RRTT), 296–342 (FFSR…EGRA), 361–430 (LSQN…RDSN), 445–475 (AANR…RNPG), and 512–533 (WNST…PEKL). 5 stretches are compositionally biased toward polar residues: residues 14–36 (VQPS…LNDS), 95–105 (SCTNCASTSAG), 112–132 (LNTV…SSMV), 167–184 (DFTT…SYSQ), and 192–215 (AVST…QTVP). A compositionally biased stretch (low complexity) spans 216–234 (SSRDSSRSSFRSHFSPRQS). A compositionally biased stretch (polar residues) spans 236 to 267 (SFRNSSHPAFSYFSSRNETPTISNSERGSSQR). Basic and acidic residues predominate over residues 268-279 (PYRESSDNEGRR). Residues 296–305 (FFSRRSSQDS) are compositionally biased toward low complexity. The segment covering 306–323 (LNTRSLSSENYISPRTLT) has biased composition (polar residues). Ser-318 carries the phosphoserine modification. The span at 324–337 (SQSRNNGTSSSSDV) shows a compositional bias: low complexity. At Ser-390 the chain carries Phosphoserine. Residues 451-463 (ASGASSSAAAGGS) show a composition bias toward low complexity. The span at 517-533 (GKNDKAKSAPSRDPEKL) shows a compositional bias: basic and acidic residues. The RING-CH-type zinc-finger motif lies at 546–616 (DDEEEGDLCR…ELCKEKLQLN (71 aa)). Residues Cys-554, Cys-557, Cys-572, Cys-574, His-582, Cys-585, Cys-606, and Cys-609 each contribute to the Zn(2+) site. A Phosphothreonine modification is found at Thr-688. Ser-689 is modified (phosphoserine).

In terms of tissue distribution, expressed in brain, thymus, muscle and kidney.

It localises to the cytoplasm. The catalysed reaction is S-ubiquitinyl-[E2 ubiquitin-conjugating enzyme]-L-cysteine + [acceptor protein]-L-lysine = [E2 ubiquitin-conjugating enzyme]-L-cysteine + N(6)-ubiquitinyl-[acceptor protein]-L-lysine.. Its pathway is protein modification; protein ubiquitination. Functionally, E3 ubiquitin-protein ligase which may specifically enhance the E2 activity of HIP2. E3 ubiquitin ligases accept ubiquitin from an E2 ubiquitin-conjugating enzyme in the form of a thioester and then directly transfer the ubiquitin to targeted substrates. May be involved in T-cell proliferation by regulating LIF secretion. May play a role in lysosome homeostasis. Promotes 'Lys-6', 'Lys-11' and 'Lys-63'-linked mixed polyubiquitination on ATG14 leading to the inhibition of autophagy by impairing the interaction between ATG14 and STX7. Participates in the dopamine-mediated negative regulation of the NLRP3 inflammasome by promoting its uibiquitination and subsequent degradation. This chain is E3 ubiquitin-protein ligase MARCHF7 (Marchf7), found in Mus musculus (Mouse).